We begin with the raw amino-acid sequence, 498 residues long: Lipase 3 (498 aa).

A disulfide bond links C60 and C91. N193 carries an N-linked (GlcNAc...) asparagine glycan. Residue S200 is the Acyl-ester intermediate of the active site. N384 is a glycosylation site (N-linked (GlcNAc...) asparagine). H409 functions as the Charge relay system in the catalytic mechanism. The N-linked (GlcNAc...) asparagine glycan is linked to N418.

It belongs to the type-B carboxylesterase/lipase family.

The catalysed reaction is a triacylglycerol + H2O = a diacylglycerol + a fatty acid + H(+). The sequence is that of Lipase 3 (LIP3) from Yarrowia lipolytica (strain CLIB 122 / E 150) (Yeast).